We begin with the raw amino-acid sequence, 349 residues long: Divinyl chlorophyll a/b light-harvesting protein PcbB (349 aa).

6 helical membrane passes run 27 to 47 (FIAA…AATL), 57 to 77 (LPMG…GIGF), 91 to 113 (IAIL…SVYF), 201 to 221 (VMGG…FHIA), 241 to 261 (AILS…AFWA), and 306 to 326 (LVNV…WHAL).

The protein belongs to the PsbB/PsbC family. IsiA/Pcb subfamily. The antenna complex consists of divinyl chlorophylls (a and b) and divinyl chlorophyll a/b binding proteins and binds more divinyl chlorophyll b than does the antenna complex from high-light-adapted Prochlorococcus. Divinyl chlorophyll a is required as a cofactor. The cofactor is divinyl chlorophyll b.

It is found in the cellular thylakoid membrane. In terms of biological role, the antenna complex functions as a light receptor, it captures and delivers excitation energy to photosystems II and I. The Prochlorales pcb genes are not related to higher plant LHCs. The chain is Divinyl chlorophyll a/b light-harvesting protein PcbB (pcbB) from Prochlorococcus marinus (strain SARG / CCMP1375 / SS120).